Consider the following 373-residue polypeptide: MAGSEKSSLTKPRWLLAELTYACPLQCPYCSNPLDYARLGDELSTEEWKRVLSEARALGAVQLGLSGGEPLTRRDLAEIVTHARQLGYYTNLITSGYGLDEVRIAELKSAGLDHIQVSIQSPEKLLNDELAGTESFEHKLKVARWVKQHGYPMVLCVVIHRQNIHQMQQILEMADELGADYLELANTQYYGWALLNRDHLLPTREQFAEAEAIAQSYKEKVKGRMKIYYVVPDYYEDRPKACMNGWGTTFLTIAPDGMALPCHAARELPGLNCPSVRDFSIREIWYESAAFNRFRSYGWMKEPCRSCPEKEKDFGGCRCQAYLMTGDMADADPVCSKSPHHHRVLEAIASTQRSASDKPLFFRNARNSRALTG.

One can recognise a Radical SAM core domain in the interval 9-224 (LTKPRWLLAE…QSYKEKVKGR (216 aa)). Residues Cys-23, Cys-27, and Cys-30 each contribute to the [4Fe-4S] cluster site.

The protein belongs to the radical SAM superfamily. PqqE family. Interacts with PqqD. The interaction is necessary for activity of PqqE. It depends on [4Fe-4S] cluster as a cofactor.

It catalyses the reaction [PQQ precursor protein] + S-adenosyl-L-methionine = E-Y cross-linked-[PQQ precursor protein] + 5'-deoxyadenosine + L-methionine + H(+). Its pathway is cofactor biosynthesis; pyrroloquinoline quinone biosynthesis. Its function is as follows. Catalyzes the cross-linking of a glutamate residue and a tyrosine residue in the PqqA protein as part of the biosynthesis of pyrroloquinoline quinone (PQQ). The chain is PqqA peptide cyclase from Methylococcus capsulatus (strain ATCC 33009 / NCIMB 11132 / Bath).